A 202-amino-acid polypeptide reads, in one-letter code: dTTP/UTP pyrophosphatase (202 aa).

The Proton acceptor role is filled by Asp71.

It belongs to the Maf family. YhdE subfamily. A divalent metal cation serves as cofactor.

The protein localises to the cytoplasm. The catalysed reaction is dTTP + H2O = dTMP + diphosphate + H(+). It catalyses the reaction UTP + H2O = UMP + diphosphate + H(+). In terms of biological role, nucleoside triphosphate pyrophosphatase that hydrolyzes dTTP and UTP. May have a dual role in cell division arrest and in preventing the incorporation of modified nucleotides into cellular nucleic acids. This Zymomonas mobilis subsp. mobilis (strain ATCC 31821 / ZM4 / CP4) protein is dTTP/UTP pyrophosphatase.